Here is a 228-residue protein sequence, read N- to C-terminus: Urease accessory protein UreF (228 aa).

The protein belongs to the UreF family. UreD, UreF and UreG form a complex that acts as a GTP-hydrolysis-dependent molecular chaperone, activating the urease apoprotein by helping to assemble the nickel containing metallocenter of UreC. The UreE protein probably delivers the nickel.

It localises to the cytoplasm. Functionally, required for maturation of urease via the functional incorporation of the urease nickel metallocenter. The polypeptide is Urease accessory protein UreF (Dechloromonas aromatica (strain RCB)).